A 210-amino-acid chain; its full sequence is Chloramphenicol acetyltransferase (210 aa).

The active site involves His-79.

Belongs to the transferase hexapeptide repeat family.

The catalysed reaction is chloramphenicol + acetyl-CoA = chloramphenicol 3-acetate + CoA. Functionally, this enzyme is an effector of chloramphenicol resistance in bacteria. In Escherichia coli, this protein is Chloramphenicol acetyltransferase (catB2).